The chain runs to 318 residues: Melanoma-associated antigen 8 (318 aa).

The tract at residues 1 to 103 (MLLGQKSQRY…GPSTSPDPAH (103 aa)) is disordered. Residues 112–311 (LDEKVAELVR…ISYPSLHEEA (200 aa)) enclose the MAGE domain.

In terms of tissue distribution, expressed in many tumors of several types, such as melanoma, head and neck squamous cell carcinoma, lung carcinoma and breast carcinoma, but not in normal tissues except for testis and placenta.

In terms of biological role, not known, though may play a role in embryonal development and tumor transformation or aspects of tumor progression. The polypeptide is Melanoma-associated antigen 8 (MAGEA8) (Homo sapiens (Human)).